Here is a 223-residue protein sequence, read N- to C-terminus: Deoxyribose-phosphate aldolase (223 aa).

The active-site Proton donor/acceptor is D89. K152 serves as the catalytic Schiff-base intermediate with acetaldehyde. K181 acts as the Proton donor/acceptor in catalysis.

This sequence belongs to the DeoC/FbaB aldolase family. DeoC type 1 subfamily.

It localises to the cytoplasm. It catalyses the reaction 2-deoxy-D-ribose 5-phosphate = D-glyceraldehyde 3-phosphate + acetaldehyde. It participates in carbohydrate degradation; 2-deoxy-D-ribose 1-phosphate degradation; D-glyceraldehyde 3-phosphate and acetaldehyde from 2-deoxy-alpha-D-ribose 1-phosphate: step 2/2. Its function is as follows. Catalyzes a reversible aldol reaction between acetaldehyde and D-glyceraldehyde 3-phosphate to generate 2-deoxy-D-ribose 5-phosphate. In Listeria innocua serovar 6a (strain ATCC BAA-680 / CLIP 11262), this protein is Deoxyribose-phosphate aldolase.